Reading from the N-terminus, the 237-residue chain is Eukaryotic translation initiation factor 3 subunit K (237 aa).

The PCI domain maps to 44 to 219 (CDCNANRALL…EARKAEIRED (176 aa)).

The protein belongs to the eIF-3 subunit K family. In terms of assembly, component of the eukaryotic translation initiation factor 3 (eIF-3) complex.

The protein resides in the cytoplasm. Component of the eukaryotic translation initiation factor 3 (eIF-3) complex, which is involved in protein synthesis of a specialized repertoire of mRNAs and, together with other initiation factors, stimulates binding of mRNA and methionyl-tRNAi to the 40S ribosome. The eIF-3 complex specifically targets and initiates translation of a subset of mRNAs involved in cell proliferation. The sequence is that of Eukaryotic translation initiation factor 3 subunit K from Neurospora crassa (strain ATCC 24698 / 74-OR23-1A / CBS 708.71 / DSM 1257 / FGSC 987).